The following is a 323-amino-acid chain: Ferrochelatase (323 aa).

The Fe cation site is built by His-196 and Glu-277.

This sequence belongs to the ferrochelatase family.

Its subcellular location is the cytoplasm. It catalyses the reaction heme b + 2 H(+) = protoporphyrin IX + Fe(2+). The protein operates within porphyrin-containing compound metabolism; protoheme biosynthesis; protoheme from protoporphyrin-IX: step 1/1. Functionally, catalyzes the ferrous insertion into protoporphyrin IX. This Haemophilus influenzae (strain PittEE) protein is Ferrochelatase.